We begin with the raw amino-acid sequence, 698 residues long: ATP-dependent RNA helicase DHX33 (698 aa).

Disordered regions lie at residues 1–20 (MPEEASLPPAKRFRPGSCPP) and 29–50 (TAGGGGGAGGGRRQTPPLAQPS). Positions 1-71 (MPEEASLPPA…RRSLPIFRAR (71 aa)) are required for nucleolar location. The span at 30-40 (AGGGGGAGGGR) shows a compositional bias: gly residues. The 169-residue stretch at 75–243 (LAQLRNLDNA…FNRAPVLYLE (169 aa)) folds into the Helicase ATP-binding domain. 88 to 95 (GETGSGKT) lines the ATP pocket. Residues 185–188 (DEAH) carry the DEAH box motif. A Helicase C-terminal domain is found at 271 to 441 (QIHQEAPASQ…SVILQLLAMK (171 aa)). The interval 462 to 553 (AIAQLDLLGA…ISSEGDHITL (92 aa)) is HA2; required for interaction with EIF3G and RPL26. Residues 536-550 (VQSVRKKFISSEGDH) carry the Critical for rDNA-binding motif.

This sequence belongs to the DEAD box helicase family. DEAH subfamily. In terms of assembly, interacts with UBTF. Interacts with DDX3X, EIF3G and EIF3H; the interaction is independent of RNA. Interacts (via HA2 region and Helicase C-terminal domain) with the components of the large ribosomal subunit RPL3, RPL7, RPL26 and RPL27. Binds to mRNA. Interacts (via the helicase C-terminal domain) with MAVS. Binds to double-stranded RNA (via the helicase C-terminal domain). In terms of processing, ubiquitinated, leading to its degradation by the proteasome. Deubiquitinated by USP36.

Its subcellular location is the nucleus. It is found in the nucleolus. It localises to the nucleoplasm. The protein localises to the cytoplasm. The protein resides in the inflammasome. It carries out the reaction ATP + H2O = ADP + phosphate + H(+). In terms of biological role, implicated in nucleolar organization, ribosome biogenesis, protein synthesis and cytoplasmic dsRNA sensing. Stimulates RNA polymerase I transcription of the 47S precursor rRNA. Associates with ribosomal DNA (rDNA) loci where it is involved in POLR1A recruitment. In the cytoplasm, promotes elongation-competent 80S ribosome assembly at the late stage of mRNA translation initiation. Senses cytosolic dsRNA mediating NLRP3 inflammasome formation in macrophages and type I interferon production in myeloid dendritic cells. Required for NLRP3 activation induced by viral dsRNA and bacterial RNA. In dendritic cells, required for induction of type I interferon production induced by cytoplasmic dsRNA via the activation of MAPK and NF-kappa-B signaling pathways. In Mus musculus (Mouse), this protein is ATP-dependent RNA helicase DHX33.